Consider the following 231-residue polypeptide: Ribose-5-phosphate isomerase A (231 aa).

Substrate contacts are provided by residues 28–31, 83–86, and 96–99; these read TGST, DGAD, and KGGG. Catalysis depends on E105, which acts as the Proton acceptor. K123 is a binding site for substrate.

The protein belongs to the ribose 5-phosphate isomerase family. Homodimer.

The catalysed reaction is aldehydo-D-ribose 5-phosphate = D-ribulose 5-phosphate. Its pathway is carbohydrate degradation; pentose phosphate pathway; D-ribose 5-phosphate from D-ribulose 5-phosphate (non-oxidative stage): step 1/1. Functionally, catalyzes the reversible conversion of ribose-5-phosphate to ribulose 5-phosphate. This chain is Ribose-5-phosphate isomerase A, found in Sinorhizobium fredii (strain NBRC 101917 / NGR234).